An 87-amino-acid polypeptide reads, in one-letter code: Large ribosomal subunit protein bL27 (87 aa).

A disordered region spans residues 1-21 (MAHKKAGGSSRNGRDSESKRL).

Belongs to the bacterial ribosomal protein bL27 family.

The sequence is that of Large ribosomal subunit protein bL27 from Burkholderia multivorans (strain ATCC 17616 / 249).